Here is a 644-residue protein sequence, read N- to C-terminus: Chaperone protein DnaK (644 aa).

Residue T199 is modified to Phosphothreonine; by autocatalysis. The disordered stretch occupies residues 602–644; the sequence is IYAKKSSEGQTAQGQTQSQESTKPAEEGVVDAEFEEVKEEDKK. Residues 609 to 623 show a composition bias toward polar residues; it reads EGQTAQGQTQSQEST. The segment covering 629 to 644 has biased composition (acidic residues); that stretch reads GVVDAEFEEVKEEDKK.

This sequence belongs to the heat shock protein 70 family.

Acts as a chaperone. The sequence is that of Chaperone protein DnaK from Legionella pneumophila (strain Lens).